Here is a 494-residue protein sequence, read N- to C-terminus: MANYFNTLNLREQLDQLGRCRFMDREEFTTEAEYLEGKKIVIVGCGAQGLNQGLNMRDSGLDVSYALRQAAIDEKRQSFKNADENGFVVGSYETLIPQADLVINLTPDKQHTNVVETVMPLMKEGAALGYSHGFNVVEEGMQLRADLTVVMVAPKCPGSEVREEYKRGFGVPTLIAVHPENDPKGEGWDIAKAWAAGTGGHRAGCLESSFVAEVKSDLMGEQTILCGMLQAGSIVSYEKMIADGIEPGYAGKLLQYGWETITEALKFGGVTHMMDRLSNPAKVKAFELSEELKDLMRPLYNKHMDDIISGHFSSTMMADWANDDVNLLGWREETGETAFENYPASDVEISEQEYFDNGILMVAMVRAGVELAFEAMTASGIIDESAYYESLHELPLIANTVARKRLYEMNVVISDTAEYGNYLFANVATPLLREKFMPSVATDVIGRGLGGTSNQVDNAKLIEVNEAIRNHPVEYIGEELRSYMSDMKRIAVGG.

The 195-residue stretch at 14 to 208 folds into the KARI N-terminal Rossmann domain; that stretch reads LDQLGRCRFM…GGHRAGCLES (195 aa). Residues 45–48, Arg-68, Arg-76, Ser-78, and 108–110 each bind NADP(+); these read CGAQ and DKQ. His-132 is a catalytic residue. Gly-158 lines the NADP(+) pocket. 2 consecutive KARI C-terminal knotted domains span residues 209 to 344 and 345 to 487; these read SFVA…NYPA and SDVE…MSDM. Mg(2+) is bound by residues Asp-217, Glu-221, Glu-389, and Glu-393. Substrate is bound at residue Ser-414.

This sequence belongs to the ketol-acid reductoisomerase family. Mg(2+) is required as a cofactor.

It catalyses the reaction (2R)-2,3-dihydroxy-3-methylbutanoate + NADP(+) = (2S)-2-acetolactate + NADPH + H(+). The enzyme catalyses (2R,3R)-2,3-dihydroxy-3-methylpentanoate + NADP(+) = (S)-2-ethyl-2-hydroxy-3-oxobutanoate + NADPH + H(+). The protein operates within amino-acid biosynthesis; L-isoleucine biosynthesis; L-isoleucine from 2-oxobutanoate: step 2/4. It participates in amino-acid biosynthesis; L-valine biosynthesis; L-valine from pyruvate: step 2/4. In terms of biological role, involved in the biosynthesis of branched-chain amino acids (BCAA). Catalyzes an alkyl-migration followed by a ketol-acid reduction of (S)-2-acetolactate (S2AL) to yield (R)-2,3-dihydroxy-isovalerate. In the isomerase reaction, S2AL is rearranged via a Mg-dependent methyl migration to produce 3-hydroxy-3-methyl-2-ketobutyrate (HMKB). In the reductase reaction, this 2-ketoacid undergoes a metal-dependent reduction by NADPH to yield (R)-2,3-dihydroxy-isovalerate. In Vibrio atlanticus (strain LGP32) (Vibrio splendidus (strain Mel32)), this protein is Ketol-acid reductoisomerase (NADP(+)).